A 663-amino-acid chain; its full sequence is UvrABC system protein B (663 aa).

In terms of domain architecture, Helicase ATP-binding spans 27 to 414; the sequence is KNIENGVKDQ…SDNHIAEQLI (388 aa). 40–47 serves as a coordination point for ATP; that stretch reads GVTGSGKT. A Beta-hairpin motif is present at residues 93-116; that stretch reads YYDYYQPEAYIKTTDTYIEKDSSV. The region spanning 432–594 is the Helicase C-terminal domain; sequence QVDDLLDEIR…IDPKSIIKEI (163 aa). The UVR domain maps to 624-659; the sequence is EKEITKLEKKIKKLVEELDFEQAIILRDEMLKLKEL.

The protein belongs to the UvrB family. Forms a heterotetramer with UvrA during the search for lesions. Interacts with UvrC in an incision complex.

The protein localises to the cytoplasm. The UvrABC repair system catalyzes the recognition and processing of DNA lesions. A damage recognition complex composed of 2 UvrA and 2 UvrB subunits scans DNA for abnormalities. Upon binding of the UvrA(2)B(2) complex to a putative damaged site, the DNA wraps around one UvrB monomer. DNA wrap is dependent on ATP binding by UvrB and probably causes local melting of the DNA helix, facilitating insertion of UvrB beta-hairpin between the DNA strands. Then UvrB probes one DNA strand for the presence of a lesion. If a lesion is found the UvrA subunits dissociate and the UvrB-DNA preincision complex is formed. This complex is subsequently bound by UvrC and the second UvrB is released. If no lesion is found, the DNA wraps around the other UvrB subunit that will check the other stand for damage. This chain is UvrABC system protein B, found in Fusobacterium nucleatum subsp. nucleatum (strain ATCC 25586 / DSM 15643 / BCRC 10681 / CIP 101130 / JCM 8532 / KCTC 2640 / LMG 13131 / VPI 4355).